A 243-amino-acid polypeptide reads, in one-letter code: DNA polymerase III subunit epsilon (243 aa).

Asp12 and Glu14 together coordinate a divalent metal cation. Substrate is bound by residues Asp12, Glu14, Glu61, and His66. His162 (proton acceptor) is an active-site residue. An a divalent metal cation-binding site is contributed by Asp167. Asp167 is a binding site for substrate.

In a ternary complex this subunit contacts both the beta sliding clamp (dnaN) and the polymerase subunit (dnaE). The DNA polymerase III holoenzyme complex contains at least 10 different subunits organized into 3 functionally essential subassemblies: the Pol III core, the beta sliding clamp processivity factor and the clamp-loading complex. The Pol III core (subunits alpha, epsilon and theta) contains the polymerase and the 3'-5' exonuclease proofreading activities. The polymerase is tethered to the template via the dimeric beta sliding clamp processivity factor. The clamp loader (also called gamma complex) assembles the beta sliding clamp onto the primed template and plays a central role in the organization and communication at the replication fork. The clamp-loading complex contains delta, delta', psi and chi, and 3 copies of either or both of two different DnaX proteins, gamma and tau. The DNA replisome complex has a single clamp loader (3 tau and 1 each of delta, delta', psi and chi subunits) which binds 3 Pol III cores (1 core on the leading strand and 2 on the lagging strand) each with a beta sliding clamp dimer. Additional proteins in the replisome are other copies of gamma, psi and chi, Ssb, DNA helicase and RNA primase. Mg(2+) is required as a cofactor. It depends on Mn(2+) as a cofactor.

It catalyses the reaction DNA(n) + a 2'-deoxyribonucleoside 5'-triphosphate = DNA(n+1) + diphosphate. DNA polymerase III is a complex, multichain enzyme responsible for most of the replicative synthesis in bacteria. The epsilon subunit contain the editing function and is a proofreading 3'-5' exonuclease. Contacts both the beta sliding clamp (dnaN) and the polymerase subunit (dnaE), stabilizing their interaction. In Escherichia coli (strain K12), this protein is DNA polymerase III subunit epsilon (dnaQ).